We begin with the raw amino-acid sequence, 444 residues long: MEQNADMEPDRQVNQRPPRFRARGAGVRGRGRVRRSAFSRGQRRPIIRVDDLQLPDPLYVMQALQRDHTLEMPRGQVDFSWIEAEERRVGPTDEWYFEAVKTYKAKPGDDLQTIIKNYAKISLECGAVYEINSKIRVTGACYIIGNCAVLRPNLPAGEAMFEVLNVDFIPSIGFMERIVFSNVIFDCRTTATVVCCISERNTLFHNCVFSGPHMLCLDLRAGAEVRGCHFVGAVCALRSKGLYSIRVKNSIFEKCAFGVVTGSKASISHCMFKDCTCSIMLGGQGTIAHSQFIVTTSAEAPMNLQLCTCEGNGSHVVPLGNIHFASHREASWPTFYANTLVRVRLYMGRRRGVFHPKQSTLSMCVIAAPRGVVQRIYLFGVYDATCAIMQLGEAGNAASERLCTCGFRHSTPSLRATYVTDTRIDRELNSQDTAEFFSSDEDNF.

The disordered stretch occupies residues 1 to 35; the sequence is MEQNADMEPDRQVNQRPPRFRARGAGVRGRGRVRR. Phosphoserine occurs at positions 438 and 439.

This sequence belongs to the adenoviridae E1B 55 kDa protein family. As to quaternary structure, interacts with host PML-4 and PML-5; this interaction promotes efficient subnuclear targeting of E1B-55K to PML nuclear bodies. Interacts with E4-ORF3 protein. Interacts with E4-ORF6 protein.

The protein localises to the host nucleus. The protein resides in the host cytoplasm. Plays a major role to prevent cellular inhibition of viral genome replication. Assembles an SCF-like E3 ubiquitin ligase complex based on the cellular proteins ELOB, ELOC, CUL5 and RBX1, in cooperation with viral E4orf6. This viral RING-type ligase ubiquitinates cellular substrates and targets them to proteasomal degradation: TP53/p53, LIG4, MRE11-RAD50-NBS1 (MRN) complex, ITGA3, DAXX and BLM. E1B-55K probably acts as the substrate-specific adapter of the SCF-like E3 ubiquitin ligase complex. Degradation of host TP53/p53 activity is essential for preventing E1A-induced TP53 accumulation that would otherwise lead to cell apoptosis and growth arrest. E1B-55K also inactivates TP53 transcription-factor activity by binding its transactivation domain. E1B-55K also functions as a SUMO1 E3 ligase for TP53 which causes the latter to be sequestered in promyelocytic leukemia (PML) nuclear bodies thereby contributing to maximal inhibition of TP53 function. In Canis lupus familiaris (Dog), this protein is E1B 55 kDa protein.